A 507-amino-acid polypeptide reads, in one-letter code: ATP synthase subunit alpha, chloroplastic (507 aa).

170–177 (GDRQTGKT) is a binding site for ATP.

This sequence belongs to the ATPase alpha/beta chains family. As to quaternary structure, F-type ATPases have 2 components, CF(1) - the catalytic core - and CF(0) - the membrane proton channel. CF(1) has five subunits: alpha(3), beta(3), gamma(1), delta(1), epsilon(1). CF(0) has four main subunits: a, b, b' and c.

It is found in the plastid. The protein resides in the chloroplast thylakoid membrane. It carries out the reaction ATP + H2O + 4 H(+)(in) = ADP + phosphate + 5 H(+)(out). Produces ATP from ADP in the presence of a proton gradient across the membrane. The alpha chain is a regulatory subunit. The protein is ATP synthase subunit alpha, chloroplastic of Lemna minor (Common duckweed).